Here is a 128-residue protein sequence, read N- to C-terminus: QECKCHGTSGSCQFKTCWYVTPDFRAVSTLMRDKLQRAVFVNSRNKNSGAFHPRLNKKRLQRELVYFEKSPDFCEKDPRVDSLGTQGRVCNKTSQQMDNCASLCCGRGHNVLMQTRRERCNCRFHWCC.

Intrachain disulfides connect Cys-3–Cys-17, Cys-5–Cys-12, Cys-74–Cys-105, Cys-90–Cys-100, and Cys-127–Cys-128. Ser-9 carries the O-palmitoleoyl serine; by PORCN lipid modification. An N-linked (GlcNAc...) asparagine glycan is attached at Asn-91.

Belongs to the Wnt family. Palmitoleoylation is required for efficient binding to frizzled receptors. Depalmitoleoylation leads to Wnt signaling pathway inhibition. In terms of tissue distribution, in embryo, in dorsal hindbrain; in adults, in brain.

It is found in the secreted. The protein resides in the extracellular space. The protein localises to the extracellular matrix. In terms of biological role, ligand for members of the frizzled family of seven transmembrane receptors. Probable developmental protein. May be a signaling molecule which affects the development of discrete regions of tissues. Is likely to signal over only few cell diameters. This Xenopus laevis (African clawed frog) protein is Protein Wnt-10 (wnt10).